The following is a 109-amino-acid chain: V-type proton ATPase 16 kDa proteolipid subunit (109 aa).

The helical transmembrane segment at 1 to 20 (VPVVMAGVLGIYGLIIAVII) threads the bilayer. Residues 21–39 (STGINPKAKPYYLFDGYAH) are Lumenal-facing. A helical transmembrane segment spans residues 40-61 (LSSGLACGLAGLAAGMAIGIVG). Residues 62–73 (DAGVRANAQQPK) are Cytoplasmic-facing. A helical membrane pass occupies residues 74-99 (LFVGMILILIFAEALALYGLIVGIIL). Over 100–109 (SSRAGQSRAD) the chain is Lumenal.

Belongs to the V-ATPase proteolipid subunit family. V-ATPase is a heteromultimeric enzyme composed of a peripheral catalytic V1 complex (main components: subunits A, B, C, D, E, and F) attached to an integral membrane V0 proton pore complex (main component: the proteolipid protein; which is present as a hexamer that forms the proton-conducting pore). As to expression, high expression in the mesocotyl tip of etiolated seedlings compared to the base.

The protein localises to the vacuole membrane. Functionally, proton-conducting pore forming subunit of the membrane integral V0 complex of vacuolar ATPase. V-ATPase is responsible for acidifying a variety of intracellular compartments in eukaryotic cells. The chain is V-type proton ATPase 16 kDa proteolipid subunit from Zea mays (Maize).